The chain runs to 199 residues: Probable GTP-binding protein EngB (199 aa).

One can recognise an EngB-type G domain in the interval 28-199 (DLPEIALAGR…DSWDAILEQV (172 aa)). Residues 36–43 (GRSNVGKS), 63–67 (GKTQL), 81–84 (DVPG), 148–151 (TKAD), and 180–182 (FSS) each bind GTP. Ser-43 and Thr-65 together coordinate Mg(2+).

Belongs to the TRAFAC class TrmE-Era-EngA-EngB-Septin-like GTPase superfamily. EngB GTPase family. Mg(2+) is required as a cofactor.

Functionally, necessary for normal cell division and for the maintenance of normal septation. This chain is Probable GTP-binding protein EngB, found in Streptococcus pyogenes serotype M3 (strain SSI-1).